The primary structure comprises 384 residues: G protein-coupled receptor 88 (384 aa).

The Extracellular portion of the chain corresponds to 1 to 35 (MTNSSSTSTSSTTGGSLLLLCEEEESWAGRRIPVS). A glycan (N-linked (GlcNAc...) asparagine) is linked at N3. Residues 36–56 (LLYSGLAIGGTLANGMVIYLV) form a helical membrane-spanning segment. The Cytoplasmic segment spans residues 57-73 (SSFRKLQTTSNAFIVNG). Residues 74-94 (CAADLSVCALWMPQEAVLGLL) traverse the membrane as a helical segment. The Extracellular portion of the chain corresponds to 95–116 (PTGSAEPPADWDGAGGSYRLLR). Residues 117–136 (GGLLGLGLTVSLLSHCLVAL) form a helical membrane-spanning segment. Topologically, residues 137-158 (NRYLLITRAPATYQALYQRRHT) are cytoplasmic. Residues 159–179 (AGMLALSWALALGLVLLLPPW) form a helical membrane-spanning segment. Topologically, residues 180 to 195 (APRPGAAPPRVHYPAL) are extracellular. Residues 196–216 (LAAAALLAQTALLLHCYLGIV) form a helical membrane-spanning segment. The Cytoplasmic portion of the chain corresponds to 217–285 (RRVRVSVKRV…RAQRRLSGLS (69 aa)). A helical transmembrane segment spans residues 286–306 (VLLLCCVFLLATQPLVWVSLA). Residues 307–310 (SGFS) lie on the Extracellular side of the membrane. Residues 311–331 (LPVPWGVQAASWLLCCALSAL) form a helical membrane-spanning segment. Residues 332–384 (NPLLYTWRNEEFRRSVRSVLPGVGDAAAAAVAATAVPAVSQAQLGTRAAGQHW) lie on the Cytoplasmic side of the membrane.

Belongs to the G-protein coupled receptor 1 family. As to expression, expressed predominantly in the striatum.

The protein localises to the cell membrane. It localises to the cell projection. The protein resides in the cilium membrane. Its subcellular location is the cytoplasm. It is found in the nucleus. Orphan G protein-coupled receptor implicated in a large repertoire of behavioral responses that engage motor activities, spatial learning, and emotional processing. May play a role in the regulation of cognitive and motor function. Couples with the heterotrimeric G protein complex of the G(i) subfamily, consisting of GNAI1, GNB1 and GNG2, thereby acting through a G(i)-mediated pathway. Plays a role in the attenuation of D1 dopamine receptor (D1R)-mediated cAMP response in ciliated cells. In non-ciliated cells, involved in the inhibition of the beta-2 adrenergic receptor (B2AR) response. This is G protein-coupled receptor 88 (GPR88) from Homo sapiens (Human).